Here is a 176-residue protein sequence, read N- to C-terminus: Large ribosomal subunit protein uL6 (176 aa).

This sequence belongs to the universal ribosomal protein uL6 family. In terms of assembly, part of the 50S ribosomal subunit.

Its function is as follows. This protein binds to the 23S rRNA, and is important in its secondary structure. It is located near the subunit interface in the base of the L7/L12 stalk, and near the tRNA binding site of the peptidyltransferase center. The sequence is that of Large ribosomal subunit protein uL6 from Lacticaseibacillus paracasei (strain ATCC 334 / BCRC 17002 / CCUG 31169 / CIP 107868 / KCTC 3260 / NRRL B-441) (Lactobacillus paracasei).